We begin with the raw amino-acid sequence, 429 residues long: 3-phosphoshikimate 1-carboxyvinyltransferase (429 aa).

Residues lysine 20, serine 21, and arginine 25 each contribute to the 3-phosphoshikimate site. Lysine 20 provides a ligand contact to phosphoenolpyruvate. Positions 89 and 118 each coordinate phosphoenolpyruvate. 3-phosphoshikimate is bound by residues serine 164, serine 165, glutamine 166, serine 192, aspartate 311, and lysine 338. Phosphoenolpyruvate is bound at residue glutamine 166. The Proton acceptor role is filled by aspartate 311. Arginine 342 and arginine 384 together coordinate phosphoenolpyruvate.

It belongs to the EPSP synthase family. As to quaternary structure, monomer.

The protein localises to the cytoplasm. It catalyses the reaction 3-phosphoshikimate + phosphoenolpyruvate = 5-O-(1-carboxyvinyl)-3-phosphoshikimate + phosphate. Its pathway is metabolic intermediate biosynthesis; chorismate biosynthesis. Its function is as follows. Catalyzes the transfer of the enolpyruvyl moiety of phosphoenolpyruvate (PEP) to the 5-hydroxyl of shikimate-3-phosphate (S3P) to produce enolpyruvyl shikimate-3-phosphate and inorganic phosphate. In Methanococcus maripaludis (strain C7 / ATCC BAA-1331), this protein is 3-phosphoshikimate 1-carboxyvinyltransferase.